Here is a 71-residue protein sequence, read N- to C-terminus: Conotoxin Tx11.3 (71 aa).

The N-terminal stretch at 1–19 (MKLCVTFLLVLVILPSVTG) is a signal peptide. A propeptide spanning residues 20-47 (VKSSERTLSGAALRGDRGTCSGRGQECK) is cleaved from the precursor. Disulfide bonds link Cys-39-Cys-53, Cys-46-Cys-58, Cys-52-Cys-63, and Cys-57-Cys-70.

This sequence belongs to the I1 superfamily. In terms of tissue distribution, expressed by the venom duct.

Its subcellular location is the secreted. In Conus textile (Cloth-of-gold cone), this protein is Conotoxin Tx11.3.